Reading from the N-terminus, the 245-residue chain is 3-deoxy-manno-octulosonate cytidylyltransferase (245 aa).

Belongs to the KdsB family.

The protein localises to the cytoplasm. The catalysed reaction is 3-deoxy-alpha-D-manno-oct-2-ulosonate + CTP = CMP-3-deoxy-beta-D-manno-octulosonate + diphosphate. Its pathway is nucleotide-sugar biosynthesis; CMP-3-deoxy-D-manno-octulosonate biosynthesis; CMP-3-deoxy-D-manno-octulosonate from 3-deoxy-D-manno-octulosonate and CTP: step 1/1. It participates in bacterial outer membrane biogenesis; lipopolysaccharide biosynthesis. Its function is as follows. Activates KDO (a required 8-carbon sugar) for incorporation into bacterial lipopolysaccharide in Gram-negative bacteria. The chain is 3-deoxy-manno-octulosonate cytidylyltransferase from Rhodopseudomonas palustris (strain BisB18).